Reading from the N-terminus, the 210-residue chain is MRDPVETYMNLVPMVVEQTNRGERAYDIFSRLLKERIIFVTGPVEDGMSTLIVAQLLFLEAENPKKEISMYINSPGGVVTSGLAIYDTMQFIRPPVSTLCTGQAASMGSLLLAAGEKDMRFSLPNSRIMVHQPSGGFQGQATDIMLHAQEILNLKKRLNEIYVKHTGQSYQAIEDALERDNFLTAEKARDFGIVDKVIDKRPEDPVAKAA.

The active-site Nucleophile is the S106. H131 is an active-site residue.

This sequence belongs to the peptidase S14 family. Fourteen ClpP subunits assemble into 2 heptameric rings which stack back to back to give a disk-like structure with a central cavity, resembling the structure of eukaryotic proteasomes.

It localises to the cytoplasm. It catalyses the reaction Hydrolysis of proteins to small peptides in the presence of ATP and magnesium. alpha-casein is the usual test substrate. In the absence of ATP, only oligopeptides shorter than five residues are hydrolyzed (such as succinyl-Leu-Tyr-|-NHMec, and Leu-Tyr-Leu-|-Tyr-Trp, in which cleavage of the -Tyr-|-Leu- and -Tyr-|-Trp bonds also occurs).. Functionally, cleaves peptides in various proteins in a process that requires ATP hydrolysis. Has a chymotrypsin-like activity. Plays a major role in the degradation of misfolded proteins. This Afipia carboxidovorans (strain ATCC 49405 / DSM 1227 / KCTC 32145 / OM5) (Oligotropha carboxidovorans) protein is ATP-dependent Clp protease proteolytic subunit.